Reading from the N-terminus, the 615-residue chain is Ras association domain-containing protein 1 homolog (615 aa).

Disordered regions lie at residues 1–29 (MLRS…PTYQ) and 69–89 (SDDE…QSIG). Low complexity predominate over residues 76–87 (TSSTSSPQSEQS). The Phorbol-ester/DAG-type zinc finger occupies 164-214 (NHSFKTHSLLHPTWCDKCGDFIWGILKEALKCEHCNYTCHARCRDLVTLDC). The segment at 249 to 268 (PAMSSSTGSDKENGNGNSAG) is disordered. The segment covering 251 to 268 (MSSSTGSDKENGNGNSAG) has biased composition (polar residues). The Ras-associating domain maps to 396–496 (KTTSLRTITS…RALVLQENDT (101 aa)). The SARAH domain maps to 498–545 (DILWDAFEIPELENFLRILGMEEKQYVFQTQQKYQQYRYHLDAELRQR).

As to quaternary structure, interacts with rab-39 (GTP-bound form). Interacts (via SARAH domain) with cst-1; the interaction is required for the phosphorylation of cst-1. Expressed in the pharynx, epithelial cells, ciliated neurons in the head, body wall muscles, hypodermis, vulva, gonadal sheath cells, tail hypodermis and in coelomocytes. As to expression, expressed in the pharynx, neurons and vulva.

It localises to the cytoplasm. It is found in the cytoskeleton. Involved in embryonic morphogenesis. Plays a role in the organization of apical filamentous actin in epithelial cells of the developing embryo. May play a role in let-60-mediated vulval development. May induce nuclear condensation. Positively regulates the oxidative stress response, and this may be in association with the small GTPase rab-39. Not required for muscle integrity. The protein is Ras association domain-containing protein 1 homolog of Caenorhabditis elegans.